We begin with the raw amino-acid sequence, 65 residues long: Large ribosomal subunit protein bL35 (65 aa).

Basic residues predominate over residues 1-15; that stretch reads MPKLKTRKAAAKRFR. Residues 1 to 28 form a disordered region; sequence MPKLKTRKAAAKRFRQTGTGKFTRRKAN.

Belongs to the bacterial ribosomal protein bL35 family.

The sequence is that of Large ribosomal subunit protein bL35 from Cyanothece sp. (strain PCC 7425 / ATCC 29141).